The following is a 116-amino-acid chain: ATP synthase lipid-binding protein, mitochondrial (116 aa).

A mitochondrion-targeting transit peptide spans 1–24 (MYCQRLALPLTRSLLASRAPLALR). The helical transmembrane segment at 57-77 (VGVAGSGAGIGNVFGALVIGY) threads the bilayer. Position 84 is an N6,N6,N6-trimethyllysine (lysine 84). The chain crosses the membrane as a helical span at residues 92–112 (ILGFALSEAMGLFCLTMGFMI).

Belongs to the ATPase C chain family. As to quaternary structure, F-type ATPases have 2 components, CF(1) - the catalytic core - and CF(0) - the membrane proton channel. CF(1) has five subunits: alpha(3), beta(3), gamma(1), delta(1), epsilon(1). CF(0) has three main subunits: a, b and c. In terms of processing, trimethylated by ATPSCKMT at Lys-84. Methylation may be required for proper incorporation of the C subunit into the ATP synthase complex and mitochondrial respiration.

The protein localises to the mitochondrion membrane. Its function is as follows. Mitochondrial membrane ATP synthase (F(1)F(0) ATP synthase or Complex V) produces ATP from ADP in the presence of a proton gradient across the membrane which is generated by electron transport complexes of the respiratory chain. F-type ATPases consist of two structural domains, F(1) - containing the extramembraneous catalytic core and F(0) - containing the membrane proton channel, linked together by a central stalk and a peripheral stalk. During catalysis, ATP synthesis in the catalytic domain of F(1) is coupled via a rotary mechanism of the central stalk subunits to proton translocation. Part of the complex F(0) domain. A homomeric c-ring of probably 10 subunits is part of the complex rotary element. In Caenorhabditis briggsae, this protein is ATP synthase lipid-binding protein, mitochondrial.